Consider the following 376-residue polypeptide: Mitogen-activated protein kinase 4 (376 aa).

The Protein kinase domain occupies 43–329 (VPPLRPIGRG…VDEALCHPYL (287 aa)). ATP is bound by residues 49 to 57 (IGRGAYGIV) and K72. Catalysis depends on D169, which acts as the Proton acceptor. The residue at position 201 (T201) is a Phosphothreonine. Positions 201–203 (TEY) match the TXY motif. The residue at position 203 (Y203) is a Phosphotyrosine.

This sequence belongs to the protein kinase superfamily. CMGC Ser/Thr protein kinase family. MAP kinase subfamily. In terms of assembly, interacts with MEKK1, MKK1, MKK2 and MKK6. May form a ternary complex composed of MEKK1 and MKK1/MKK2 and MPK4. Interacts with MKS1 and AP2C1. May form a ternary or larger complex with MKS1 and WRKY25 and/or WRKY33. Interacts with MAP65-1. No interactions with RACK1A, RACK1B or RACK1C. Interacts directly with ASR3 and mediates its phosphorylation. Binds to MEKK2. Interacts with PAT1. Binds to HT1. In terms of processing, dually phosphorylated on Thr-201 and Tyr-203, which activates the enzyme. Autophosphorylated on serine and tyrosine residues. Dephosphorylated by DSPTP1. Phosphorylated by MKK6 in vitro. As to expression, ubiquitous. Expressed in the veins and stomatal guard cells of leaf plates, petioles, stem, roots and flowers.

The protein localises to the cytoplasm. Its subcellular location is the nucleus. The protein resides in the cytoskeleton. It carries out the reaction L-seryl-[protein] + ATP = O-phospho-L-seryl-[protein] + ADP + H(+). The catalysed reaction is L-threonyl-[protein] + ATP = O-phospho-L-threonyl-[protein] + ADP + H(+). Activated by threonine and tyrosine phosphorylation. Activated by the MAP kinase kinases MKK1 and MKK2. Activated in response to touch, wounding, low temperature, low humidity, salt stress and the bacterial elicitors flagellin and harpin. Activated upon Pseudomonas syringae pv. tomato DC3000 infection. Repressed by the protein phosphatase 2C AP2C1. Repressed by DSPTP1-mediated dephosphorylation. Activated by the MAP kinase kinase MKK6 in vitro. The ANPs-MKK6-MPK4 module is involved in the regulation of plant cytokinesis during meiosis and mitosis. Essential to promote the progression of cytokinesis and for cellularization (formation of the cell plate) during male-specific meiosis. Involved in cortical microtubules organization and stabilization by regulating the phosphorylation state of microtubule-associated proteins such as MAP65-1. Involved in root hair development process. Negative regulator of systemic acquired resistance (SAR) and salicylic acid- (SA) mediated defense response. Required for jasmonic acid- (JA) mediated defense gene expression. May regulate activity of transcription factor controlling pathogenesis-related (PR) gene expression. Seems to act independently of the SAR regulatory protein NPR1 (Nonexpresser of PR1). Phosphorylates MKS1 and transcription factors WRKY25 and WRKY33. The MEKK1, MKK1/MKK2 and MPK4 function in a signaling pathway that modulates the expression of genes responding to biotic and abiotic stresses and also plays an important role in pathogen defense by negatively regulating innate immunity. Phosphorylates MEKK2 upon treatment with flg22. Involved in stomatal movement regulation by repressing HT1 and HT1-mediated GHR1 phosphorylation. In Arabidopsis thaliana (Mouse-ear cress), this protein is Mitogen-activated protein kinase 4.